The primary structure comprises 268 residues: CCAAT/enhancer-binding protein delta (268 aa).

3 disordered regions span residues 1 to 50, 98 to 132, and 152 to 223; these read MSAA…STTP, LELL…DAPG, and AAQP…QQKL. At S2 the chain carries N-acetylserine. K120 is covalently cross-linked (Glycyl lysine isopeptide (Lys-Gly) (interchain with G-Cter in SUMO)). A compositionally biased stretch (pro residues) spans 155 to 173; it reads PTPPTSPEPPRGSPGPSLA. Residues 177–201 are compositionally biased toward basic and acidic residues; the sequence is VREKGAGKRGPDRGSPEYRQRRERN. In terms of domain architecture, bZIP spans 191-254; sequence SPEYRQRRER…ASLRQFFKEL (64 aa). The segment at 195-222 is basic motif; the sequence is RQRRERNNIAVRKSRDKAKRRNQEMQQK. The segment at 226-254 is leucine-zipper; it reads LSAENEKLHQRVEQLTRDLASLRQFFKEL.

It belongs to the bZIP family. C/EBP subfamily. Binds DNA as a homodimer and as a heterodimer. Can form stable heterodimers with CEBPA, CEBPB and CEBPE. Directly interacts with SPI1/PU.1; this interaction does not affect DNA-binding properties of each partner. Interacts with PRDM16. In terms of tissue distribution, ubiquitously expressed.

Its subcellular location is the nucleus. Transcription activator that recognizes two different DNA motifs: the CCAAT homology common to many promoters and the enhanced core homology common to many enhancers. Important transcription factor regulating the expression of genes involved in immune and inflammatory responses. Transcriptional activator that enhances IL6 transcription alone and as heterodimer with CEBPB. The polypeptide is CCAAT/enhancer-binding protein delta (Cebpd) (Rattus norvegicus (Rat)).